The following is a 739-amino-acid chain: Vascular cell adhesion protein 1 (739 aa).

Residues 1–24 (MPRKMVVIFGASNILWMVFAVSQA) form the signal peptide. Ig-like C2-type domains follow at residues 25 to 105 (SKME…KKLE), 109 to 212 (QVEI…KERE), 223 to 309 (PRNT…LIVQ), 312 to 399 (PFTV…IKVD), 408 to 506 (EVEM…QTLY), 511 to 595 (PRDT…VELI), and 600 to 684 (PKDI…LTLD). Over 25–698 (SKMEIFLEPR…ENNKDYFSPE (674 aa)) the chain is Extracellular. 5 cysteine pairs are disulfide-bonded: cysteine 47/cysteine 95, cysteine 52/cysteine 99, cysteine 137/cysteine 195, cysteine 246/cysteine 291, and cysteine 335/cysteine 383. Asparagine 76 and asparagine 77 each carry an N-linked (GlcNAc...) asparagine glycan. The N-linked (GlcNAc...) asparagine glycan is linked to asparagine 273. An N-linked (GlcNAc...) asparagine glycan is attached at asparagine 531. Cysteine 534 and cysteine 579 are disulfide-bonded. Residues 699–720 (LLVLYCASSLIIPAIGMIIYFA) form a helical membrane-spanning segment. At 721-739 (RRANMKGSYSLVEAQKSKV) the chain is on the cytoplasmic side.

Post-translationally, cleaved by the metalloproteinase ADAM17 to generate the soluble form. In terms of processing, sialoglycoprotein. Ubiquitinated by TRIM65 via 'Lys-48'-linked ubiquitination; leading to proteasomal degradation.

It localises to the cell membrane. The protein localises to the secreted. Functionally, cell adhesion glycoprotein predominantly expressed on the surface of endothelial cells that plays an important role in immune surveillance and inflammation. Acts as a major regulator of leukocyte adhesion to the endothelium through interaction with different types of integrins. During inflammatory responses, binds ligands on the surface of activated endothelial cells to initiate the activation of calcium channels and the plasma membrane-associated small GTPase RAC1 leading to leukocyte transendothelial migration. Also serves as a quality-control checkpoint for entry into bone marrow by providing a 'don't-eat-me' stamping in the context of major histocompatibility complex (MHC) class-I presentation. The chain is Vascular cell adhesion protein 1 (VCAM1) from Canis lupus familiaris (Dog).